The primary structure comprises 600 residues: Putative dehydrogenase XoxF (600 aa).

An N-terminal signal peptide occupies residues 1-21; that stretch reads MKNLMNGACLALLMSGTAALA. Residues Glu-192 and Asn-276 each coordinate Ca(2+). Asp-318 serves as the catalytic Proton acceptor.

It belongs to the bacterial PQQ dehydrogenase family. It depends on pyrroloquinoline quinone as a cofactor. Requires Ca(2+) as cofactor.

The chain is Putative dehydrogenase XoxF (xoxF) from Paracoccus denitrificans.